The following is a 259-amino-acid chain: Global transcriptional regulator CodY (259 aa).

Residues 1–155 are GAF domain; the sequence is MALLQKTRKI…GATVVGMEIL (155 aa). The H-T-H motif DNA-binding region spans 203–222; it reads ASKIADRVGITRSVIVNALR. Phosphoserine is present on Ser-215.

It belongs to the CodY family.

Its subcellular location is the cytoplasm. In terms of biological role, DNA-binding global transcriptional regulator which is involved in the adaptive response to starvation and acts by directly or indirectly controlling the expression of numerous genes in response to nutrient availability. During rapid exponential growth, CodY is highly active and represses genes whose products allow adaptation to nutrient depletion. This chain is Global transcriptional regulator CodY, found in Bacillus licheniformis (strain ATCC 14580 / DSM 13 / JCM 2505 / CCUG 7422 / NBRC 12200 / NCIMB 9375 / NCTC 10341 / NRRL NRS-1264 / Gibson 46).